A 294-amino-acid polypeptide reads, in one-letter code: Elongation factor Ts (294 aa).

The interval 80 to 83 is involved in Mg(2+) ion dislocation from EF-Tu; sequence TDFV.

This sequence belongs to the EF-Ts family.

The protein resides in the cytoplasm. Its function is as follows. Associates with the EF-Tu.GDP complex and induces the exchange of GDP to GTP. It remains bound to the aminoacyl-tRNA.EF-Tu.GTP complex up to the GTP hydrolysis stage on the ribosome. The chain is Elongation factor Ts from Polynucleobacter necessarius subsp. necessarius (strain STIR1).